The chain runs to 94 residues: Large ribosomal subunit protein bL25 (94 aa).

It belongs to the bacterial ribosomal protein bL25 family. As to quaternary structure, part of the 50S ribosomal subunit; part of the 5S rRNA/L5/L18/L25 subcomplex. Contacts the 5S rRNA. Binds to the 5S rRNA independently of L5 and L18.

Functionally, this is one of the proteins that binds to the 5S RNA in the ribosome where it forms part of the central protuberance. This is Large ribosomal subunit protein bL25 from Pectobacterium atrosepticum (strain SCRI 1043 / ATCC BAA-672) (Erwinia carotovora subsp. atroseptica).